A 149-amino-acid chain; its full sequence is Large ribosomal subunit protein bL9 (149 aa).

The protein belongs to the bacterial ribosomal protein bL9 family. Part of the 50S ribosomal subunit. In stalled/collided disomes (pairs of ribosomes where the leading ribosome is stalled and a second ribosome has collided with it), bL9 in the collided ribosome contacts bS6 and uL2, while it contacts only helices of the 16S rRNA in the stalled ribosome; the inter-ribosome bridge thus formed is different from that formed between normally translating ribosomes.

Its function is as follows. Binds to the 23S rRNA. The chain is Large ribosomal subunit protein bL9 from Bacillus subtilis (strain 168).